Reading from the N-terminus, the 93-residue chain is Small integral membrane protein 36 (93 aa).

Residues Leu14–Leu34 form a helical membrane-spanning segment. The disordered stretch occupies residues Pro73–Val93.

It localises to the membrane. The polypeptide is Small integral membrane protein 36 (Homo sapiens (Human)).